Reading from the N-terminus, the 330-residue chain is MIYVSRRLLITCLLLVSACVVAGIWGLRSGAVTLETSQVFAALMGDAPRSMTMVVTEWRLPRVLMALLIGAALGVSGAIFQSLMRNPLGSPDVMGFNTGAWSGVLVAMVLFGQDLTAIALSAMVGGIVTSLLVWLLAWRNGIDTFRLIIIGIGVRAMLVAFNTWLLLKASLETALTAGLWNAGSLNGLTWAKTSPSAPIIILMLIAAALLVRRMRLLEMGDDTACALGVSVERSRLLMMLVAVVLTAAATALAGPISFIALVAPHIARRISGTARWGLTQAALCGALLLLAADLCAQQLFMPYQLPVGVVTVSLGGIYLIVLLIQESRKK.

Topologically, residues 1–7 (MIYVSRR) are periplasmic. The helical transmembrane segment at 8 to 28 (LLITCLLLVSACVVAGIWGLR) threads the bilayer. Over 29 to 62 (SGAVTLETSQVFAALMGDAPRSMTMVVTEWRLPR) the chain is Cytoplasmic. A helical transmembrane segment spans residues 63–83 (VLMALLIGAALGVSGAIFQSL). Residues 84-92 (MRNPLGSPD) lie on the Periplasmic side of the membrane. The helical transmembrane segment at 93–113 (VMGFNTGAWSGVLVAMVLFGQ) threads the bilayer. Residues 114–117 (DLTA) are Cytoplasmic-facing. The chain crosses the membrane as a helical span at residues 118–138 (IALSAMVGGIVTSLLVWLLAW). The Periplasmic portion of the chain corresponds to 139-146 (RNGIDTFR). A helical transmembrane segment spans residues 147–167 (LIIIGIGVRAMLVAFNTWLLL). At 168 to 190 (KASLETALTAGLWNAGSLNGLTW) the chain is on the cytoplasmic side. Residues 191–211 (AKTSPSAPIIILMLIAAALLV) form a helical membrane-spanning segment. The Periplasmic segment spans residues 212 to 235 (RRMRLLEMGDDTACALGVSVERSR). A helical membrane pass occupies residues 236–256 (LLMMLVAVVLTAAATALAGPI). At 257 to 275 (SFIALVAPHIARRISGTAR) the chain is on the cytoplasmic side. Residues 276–296 (WGLTQAALCGALLLLAADLCA) form a helical membrane-spanning segment. Topologically, residues 297–303 (QQLFMPY) are periplasmic. A helical membrane pass occupies residues 304–324 (QLPVGVVTVSLGGIYLIVLLI). The Cytoplasmic portion of the chain corresponds to 325-330 (QESRKK).

This sequence belongs to the binding-protein-dependent transport system permease family. FecCD subfamily. In terms of assembly, the complex is composed of two ATP-binding proteins (FepC), two transmembrane proteins (FepD and FepG) and a solute-binding protein (FepB).

It localises to the cell inner membrane. Part of the ABC transporter complex FepBDGC involved in ferric enterobactin uptake. Responsible for the translocation of the substrate across the membrane. The protein is Ferric enterobactin transport system permease protein FepG (fepG) of Escherichia coli (strain K12).